The sequence spans 758 residues: Glucocorticoid receptor (758 aa).

2 disordered regions span residues 1–61 (MDPG…SANG) and 349–382 (GMSS…PSGP). Positions 1-386 (MDPGGLKHSK…AKPSGPTHKI (386 aa)) are modulating. Residues 26 to 42 (GSFSGDTGGSKSTTSTS) show a composition bias toward low complexity. 2 NR C4-type zinc fingers span residues 387 to 407 (CLVC…CGSC) and 432 to 456 (CAGR…FRKC). A DNA-binding region (nuclear receptor) is located at residues 387-461 (CLVCSDEASG…RFRKCLQAGM (75 aa)). The segment at 462–498 (NLEARKNKKLIRLKGQQTTMEPNPPPPDERACALIPK) is hinge. Residues 499 to 733 (SMPQLVPTML…FPEMLAEIIS (235 aa)) form the NR LBD domain.

This sequence belongs to the nuclear hormone receptor family. NR3 subfamily. As to quaternary structure, heteromultimeric cytoplasmic complex with HSP90AA1, HSPA1A/HSPA1B, and FKBP5 or another immunophilin such as PPID, STIP1, or the immunophilin homolog PPP5C. Upon ligand binding FKBP5 dissociates from the complex and FKBP4 takes its place, thereby linking the complex to dynein and mediating transport to the nucleus, where the complex dissociates. Directly interacts with UNC45A. Binds to DNA as a homodimer, and as heterodimer with NR3C2 or the retinoid X receptor. Binds STAT5A and STAT5B homodimers and heterodimers. Interacts with NRIP1, POU2F1, POU2F2 and TRIM28. Interacts with several coactivator complexes, including the SMARCA4 complex, CREBBP/EP300, TADA2L (Ada complex) and p160 coactivators such as NCOA2 and NCOA6. Interaction with BAG1 inhibits transactivation. Interacts with HEXIM1, PELP1 and TGFB1I1. Interacts with NCOA1, NCOA3, SMARCA4, SMARCC1, SMARCD1, and SMARCE1. Phosphorylated in the absence of hormone; becomes hyperphosphorylated in the presence of glucocorticoids. May be dephosphorylated by PPP5C, attenuates NR3C1 action. Isoform 1 is expressed in all tissues tested including liver, gills, intestine, skeletal muscle, kidney, heart, spleen, stomach, brain, pituitary, ovary, testis, skin and bladder. Isoform 2 is found only in testis.

Its subcellular location is the cytoplasm. The protein resides in the nucleus. The protein localises to the mitochondrion. It localises to the cytoskeleton. It is found in the spindle. Its subcellular location is the microtubule organizing center. The protein resides in the centrosome. Functionally, receptor for glucocorticoids (GC). Has a dual mode of action: as a transcription factor that binds to glucocorticoid response elements (GRE), both for nuclear and mitochondrial DNA, and as a modulator of other transcription factors. Affects inflammatory responses, cellular proliferation and differentiation in target tissues. Involved in chromatin remodeling. Plays a role in rapid mRNA degradation by binding to the 5' UTR of target mRNAs and interacting with PNRC2 in a ligand-dependent manner which recruits the RNA helicase UPF1 and the mRNA-decapping enzyme DCP1A, leading to RNA decay. Could act as a coactivator for STAT5-dependent transcription upon growth hormone (GH) stimulation and could reveal an essential role of hepatic GR in the control of body growth. Mediates glucocorticoid-induced apoptosis. Promotes accurate chromosome segregation during mitosis. May act as a tumor suppressor. May play a negative role in adipogenesis through the regulation of lipolytic and antilipogenic gene expression. In Oncorhynchus mykiss (Rainbow trout), this protein is Glucocorticoid receptor (nr3c1).